Here is a 160-residue protein sequence, read N- to C-terminus: Ribosome maturation factor RimP (160 aa).

It belongs to the RimP family.

The protein resides in the cytoplasm. In terms of biological role, required for maturation of 30S ribosomal subunits. The sequence is that of Ribosome maturation factor RimP from Citrifermentans bemidjiense (strain ATCC BAA-1014 / DSM 16622 / JCM 12645 / Bem) (Geobacter bemidjiensis).